Reading from the N-terminus, the 765-residue chain is MQIRYLLALSLLPKLVLADESPATSASQCLIEPPVPRIVSQPGLSAADQAKIRIASDRSKAEMGKQAIFTGDVVFSQGDRHIAADEAILDQATEQFDANGNLVFQDSNFTVTADSLQAQMRSNRATLTGAQYWLHGQQVHGDAEKLQITINNNLILTNTNFTTCPPDNVSWLLEAEKIKINSEEEWGEIWNAKLRVADIPVFYIPYMTVPVSDKRKTGFLYPSFSTSTTNGFEVSAPYYWNIAPEYDLTFTPNYMTNRGLFTKTEFRYLAGEAQNGRLNLEYLGSDQMLNGSPNRYLYNWQHQGAIDKNWRVLANFTEVSDNNYFNDLKSDVNRATDNQLSRIGEVSYFERDWDISTRVQDIKVLGEDEKPYQVMPQVNFNYRAADFWNNLDFGFNSELTNFAHQDDDVNTATRLHMAPSLTLPIHGPSGSFTSQLKLMQTNYWQEKNNSKFDSLDDTVSRTIPQVRINGQINFERFTELFEHNYRQTLEPQFQYLYVGYEDQRGIGIYDTAQLQDDYFGLFRDRRFSGLDRIADANQVTLGITTRLFDDHNQEATKFSLGQIFYLQDSKLGYEDNIFEQNQSTSVLAAELDTRLSSNWYLGAAIQYDTNTSDNKKTEVTLDFRPEANKLLQFSYRYVPDLLNSNTNDLVNISQAGVRGAWPINDSLYFVGNWYYDLNETRSIETYTGVQYESCCYAIRLSYHYRIKTNYDDNIGSTIIDEREQFESGVYLNLIIKGLGGSGPLGVSDMLNDGLFNYRKPLYLRN.

Residues 1–18 (MQIRYLLALSLLPKLVLA) form the signal peptide.

It belongs to the LptD family. Component of the lipopolysaccharide transport and assembly complex. Interacts with LptE and LptA.

The protein resides in the cell outer membrane. In terms of biological role, together with LptE, is involved in the assembly of lipopolysaccharide (LPS) at the surface of the outer membrane. The chain is LPS-assembly protein LptD from Shewanella oneidensis (strain ATCC 700550 / JCM 31522 / CIP 106686 / LMG 19005 / NCIMB 14063 / MR-1).